Reading from the N-terminus, the 636-residue chain is Ubiquitin-activating enzyme E1-like (636 aa).

Residues 28-33 (GAGGIG), aspartate 52, 60-63 (NLNR), lysine 76, and 121-126 (DNLAAR) contribute to the ATP site. The Zn(2+) site is built by cysteine 162 and cysteine 165. Residue cysteine 177 is the Glycyl thioester intermediate of the active site. 2 residues coordinate Zn(2+): cysteine 435 and cysteine 438. Residues 581 to 636 (DGIVILDDDEGEITIDAEPINGSKKRPVDTEISEAPSNKRTKLVNEPTNSDIVELD) are disordered. A compositionally biased stretch (acidic residues) spans 586–595 (LDDDEGEITI). A Nuclear localization signal motif is present at residues 619–622 (KRTK). Residues 626 to 636 (EPTNSDIVELD) are compositionally biased toward polar residues.

This sequence belongs to the ubiquitin-activating E1 family. Heterodimer of UBA2 and AOS1. The complex binds SMT3. Multiubiquitinated in vivo.

The protein resides in the nucleus. Its pathway is protein modification; protein sumoylation. Its function is as follows. The dimeric enzyme acts as a SMT3 E1 ligase. It mediates ATP-dependent activation of SMT3 and formation of a thioester with a conserved cysteine residue on AOS1. The sequence is that of Ubiquitin-activating enzyme E1-like (UBA2) from Saccharomyces cerevisiae (strain ATCC 204508 / S288c) (Baker's yeast).